The following is a 315-amino-acid chain: tRNA dimethylallyltransferase (315 aa).

13-20 (GPTASGKT) is a binding site for ATP. Substrate is bound at residue 15–20 (TASGKT). Interaction with substrate tRNA regions lie at residues 38 to 41 (DSAL), 162 to 166 (QRLSR), 243 to 248 (RCVGYR), and 276 to 283 (KRQITWLR).

It belongs to the IPP transferase family. Monomer. Mg(2+) serves as cofactor.

The enzyme catalyses adenosine(37) in tRNA + dimethylallyl diphosphate = N(6)-dimethylallyladenosine(37) in tRNA + diphosphate. Catalyzes the transfer of a dimethylallyl group onto the adenine at position 37 in tRNAs that read codons beginning with uridine, leading to the formation of N6-(dimethylallyl)adenosine (i(6)A). The protein is tRNA dimethylallyltransferase of Vibrio cholerae serotype O1 (strain ATCC 39541 / Classical Ogawa 395 / O395).